Consider the following 345-residue polypeptide: S-adenosylmethionine:tRNA ribosyltransferase-isomerase (345 aa).

The protein belongs to the QueA family. Monomer.

Its subcellular location is the cytoplasm. The enzyme catalyses 7-aminomethyl-7-carbaguanosine(34) in tRNA + S-adenosyl-L-methionine = epoxyqueuosine(34) in tRNA + adenine + L-methionine + 2 H(+). Its pathway is tRNA modification; tRNA-queuosine biosynthesis. Functionally, transfers and isomerizes the ribose moiety from AdoMet to the 7-aminomethyl group of 7-deazaguanine (preQ1-tRNA) to give epoxyqueuosine (oQ-tRNA). This Rhodospirillum rubrum (strain ATCC 11170 / ATH 1.1.1 / DSM 467 / LMG 4362 / NCIMB 8255 / S1) protein is S-adenosylmethionine:tRNA ribosyltransferase-isomerase.